The following is a 355-amino-acid chain: Zinc transporter ZIP13 homolog (355 aa).

N4 carries N-linked (GlcNAc...) asparagine glycosylation. Transmembrane regions (helical) follow at residues V37–I57, V79–E99, and L118–A138. Residue N218 is glycosylated (N-linked (GlcNAc...) asparagine). The next 2 helical transmembrane spans lie at L273–T293 and S301–P321.

Belongs to the ZIP transporter (TC 2.A.5) family. KE4/Catsup subfamily.

The protein localises to the basolateral cell membrane. It is found in the golgi apparatus membrane. Involved in zinc transport and homeostasis. This is Zinc transporter ZIP13 homolog (Zip99C) from Drosophila melanogaster (Fruit fly).